A 122-amino-acid chain; its full sequence is uncharacterized protein (122 aa).

This is an uncharacterized protein from Acidianus sp. F28 (AFV-2).